A 360-amino-acid polypeptide reads, in one-letter code: Photosystem II protein D1 (360 aa).

A run of 3 helical transmembrane segments spans residues 29-46, 118-133, and 142-156; these read YIGWFGVLMIPTLLTATS, HFLLGVASYMGREWEL, and WIFVAFSAPVAAASA. His118 is a chlorophyll a binding site. Tyr126 provides a ligand contact to pheophytin a. [CaMn4O5] cluster-binding residues include Asp170 and Glu189. The chain crosses the membrane as a helical span at residues 197 to 218; sequence FHMAGVAGVFGGSLFSAMHGSL. A chlorophyll a-binding site is contributed by His198. Residues His215 and 264 to 265 contribute to the a quinone site; that span reads SF. Position 215 (His215) interacts with Fe cation. His272 contributes to the Fe cation binding site. Residues 274–288 form a helical membrane-spanning segment; the sequence is FLAAWPVVGIWLTAL. The [CaMn4O5] cluster site is built by His332, Glu333, Asp342, and Ala344. A propeptide spanning residues 345–360 is cleaved from the precursor; sequence SNEVLPVAVNAPAVNG.

This sequence belongs to the reaction center PufL/M/PsbA/D family. PSII is composed of 1 copy each of membrane proteins PsbA, PsbB, PsbC, PsbD, PsbE, PsbF, PsbH, PsbI, PsbJ, PsbK, PsbL, PsbM, PsbT, PsbX, PsbY, PsbZ, Psb30/Ycf12, at least 3 peripheral proteins of the oxygen-evolving complex and a large number of cofactors. It forms dimeric complexes. It depends on The D1/D2 heterodimer binds P680, chlorophylls that are the primary electron donor of PSII, and subsequent electron acceptors. It shares a non-heme iron and each subunit binds pheophytin, quinone, additional chlorophylls, carotenoids and lipids. D1 provides most of the ligands for the Mn4-Ca-O5 cluster of the oxygen-evolving complex (OEC). There is also a Cl(-1) ion associated with D1 and D2, which is required for oxygen evolution. The PSII complex binds additional chlorophylls, carotenoids and specific lipids. as a cofactor. In terms of processing, tyr-161 forms a radical intermediate that is referred to as redox-active TyrZ, YZ or Y-Z. C-terminally processed by CTPA; processing is essential to allow assembly of the oxygen-evolving complex and thus photosynthetic growth.

It is found in the plastid. Its subcellular location is the chloroplast thylakoid membrane. It carries out the reaction 2 a plastoquinone + 4 hnu + 2 H2O = 2 a plastoquinol + O2. Functionally, photosystem II (PSII) is a light-driven water:plastoquinone oxidoreductase that uses light energy to abstract electrons from H(2)O, generating O(2) and a proton gradient subsequently used for ATP formation. It consists of a core antenna complex that captures photons, and an electron transfer chain that converts photonic excitation into a charge separation. The D1/D2 (PsbA/PsbD) reaction center heterodimer binds P680, the primary electron donor of PSII as well as several subsequent electron acceptors. This Heterosigma akashiwo (Chromophytic alga) protein is Photosystem II protein D1.